Consider the following 1446-residue polypeptide: DNA-directed RNA polymerase subunit beta'' (1446 aa).

4 residues coordinate Zn(2+): C217, C285, C292, and C295.

It belongs to the RNA polymerase beta' chain family. RpoC2 subfamily. In plastids the minimal PEP RNA polymerase catalytic core is composed of four subunits: alpha, beta, beta', and beta''. When a (nuclear-encoded) sigma factor is associated with the core the holoenzyme is formed, which can initiate transcription. Zn(2+) is required as a cofactor.

Its subcellular location is the plastid. It localises to the chloroplast. It carries out the reaction RNA(n) + a ribonucleoside 5'-triphosphate = RNA(n+1) + diphosphate. Its function is as follows. DNA-dependent RNA polymerase catalyzes the transcription of DNA into RNA using the four ribonucleoside triphosphates as substrates. The chain is DNA-directed RNA polymerase subunit beta'' from Thalassiosira pseudonana (Marine diatom).